A 97-amino-acid chain; its full sequence is Small ribosomal subunit protein bS6 (97 aa).

It belongs to the bacterial ribosomal protein bS6 family.

Binds together with bS18 to 16S ribosomal RNA. In Listeria innocua serovar 6a (strain ATCC BAA-680 / CLIP 11262), this protein is Small ribosomal subunit protein bS6.